The following is a 1143-amino-acid chain: FH2 domain-containing protein 1 (1143 aa).

The segment at 16–89 (GNIATAPGFM…PPTTHMNGYS (74 aa)) is disordered. 2 stretches are compositionally biased toward pro residues: residues 29–46 (TPPP…PSPP) and 56–80 (SSPP…PGLP). Residues 87 to 482 (GYSHLGKKKR…QLQRLKEQEQ (396 aa)) enclose the FH2 domain. At Ser-500 the chain carries Phosphoserine. Positions 517 to 638 (PFLHPRPISP…NHASAFPRAR (122 aa)) are disordered. The segment covering 521 to 534 (PRPISPSSPSYRPP) has biased composition (low complexity). Residues Ser-650, Ser-660, and Ser-664 each carry the phosphoserine modification. The tract at residues 706-1143 (LESVGHRGPQ…LGRILNPLRK (438 aa)) is disordered. Positions 806 to 818 (GSMSSGVGEMGDS) are enriched in low complexity. Positions 848 to 861 (LPRDKPTKRKDVVA) are enriched in basic and acidic residues. Over residues 925-947 (RGPSQNPPSSTDTVWSRQNSVRR) the composition is skewed to polar residues. Over residues 958 to 968 (PRGSSGSSSTR) the composition is skewed to low complexity. Residues 960–1086 (GSSGSSSTRP…DAAPKDSSTL (127 aa)) form an MTBD; microtubule-binding domain region. Basic and acidic residues predominate over residues 995 to 1018 (QKPEENKTCRAHSEGPESPKEEPK). The segment covering 1036-1046 (ARNTVASSSRS) has biased composition (polar residues). 2 stretches are compositionally biased toward basic and acidic residues: residues 1071–1080 (VKGDPEDAAP) and 1117–1130 (GAGE…KDSS).

Interacts with CEP170.

The protein resides in the cell projection. Its subcellular location is the cilium. It localises to the golgi apparatus. Its function is as follows. Microtubule-associated formin which regulates both actin and microtubule dynamics. Induces microtubule acetylation and stabilization and actin stress fiber formation. Regulates Golgi ribbon formation. Required for normal cilia assembly. Early in cilia assembly, may assist in the maturation and positioning of the centrosome/basal body, and once cilia assembly has initiated, may also promote cilia elongation by inhibiting disassembly. This is FH2 domain-containing protein 1 (FHDC1) from Homo sapiens (Human).